Consider the following 245-residue polypeptide: E3 ubiquitin-protein ligase RNF138 (245 aa).

Ala2 is subject to N-acetylalanine. Residues 18–58 (CPVCQEVLKTPVRTAACQHVFCRKCFLTAMRESGIHCPLCR) form an RING-type zinc finger. Cys86, Cys89, His101, and Cys105 together coordinate Zn(2+). Residues 86–105 (CRCCAKQIKFYRMRHHYKSC) form a C2HC RNF-type zinc finger. The tract at residues 128 to 153 (VGNSNRSETSASDNIETYQENTGSSG) is disordered. 2 consecutive C2H2-type zinc fingers follow at residues 157 to 180 (FKCP…NSNH) and 187 to 215 (VTCP…NQRH). The UIM domain occupies 225–243 (LQLDEETQYQTAVEESFQV).

In terms of assembly, interacts with NLK. Interacts with XRCC5/Ku80. Interacts with RBBP8/CtIP. Auto-ubiquitinated.

Its subcellular location is the chromosome. The enzyme catalyses S-ubiquitinyl-[E2 ubiquitin-conjugating enzyme]-L-cysteine + [acceptor protein]-L-lysine = [E2 ubiquitin-conjugating enzyme]-L-cysteine + N(6)-ubiquitinyl-[acceptor protein]-L-lysine.. Its pathway is protein modification; protein ubiquitination. Functionally, E3 ubiquitin-protein ligase involved in DNA damage response by promoting DNA resection and homologous recombination. Recruited to sites of double-strand breaks following DNA damage and specifically promotes double-strand break repair via homologous recombination. Two different, non-exclusive, mechanisms have been proposed. According to a report, regulates the choice of double-strand break repair by favoring homologous recombination over non-homologous end joining (NHEJ): acts by mediating ubiquitination of XRCC5/Ku80, leading to remove the Ku complex from DNA breaks, thereby promoting homologous recombination. According to another report, cooperates with UBE2Ds E2 ubiquitin ligases (UBE2D1, UBE2D2, UBE2D3 or UBE2D4) to promote homologous recombination by mediating ubiquitination of RBBP8/CtIP. Together with NLK, involved in the ubiquitination and degradation of TCF/LEF. Also exhibits auto-ubiquitination activity in combination with UBE2K. May act as a negative regulator in the Wnt/beta-catenin-mediated signaling pathway. The chain is E3 ubiquitin-protein ligase RNF138 (RNF138) from Bos taurus (Bovine).